A 165-amino-acid chain; its full sequence is uncharacterized protein (165 aa).

The chain crosses the membrane as a helical span at residues 16-36 (ASISSILNFFFFYIMEYFVAV).

This sequence belongs to the asfivirus F165R family.

The protein localises to the host membrane. This is an uncharacterized protein from Ornithodoros (relapsing fever ticks).